Here is a 346-residue protein sequence, read N- to C-terminus: Phosphoribosylformylglycinamidine cyclo-ligase (346 aa).

Belongs to the AIR synthase family.

The protein localises to the cytoplasm. The enzyme catalyses 2-formamido-N(1)-(5-O-phospho-beta-D-ribosyl)acetamidine + ATP = 5-amino-1-(5-phospho-beta-D-ribosyl)imidazole + ADP + phosphate + H(+). It participates in purine metabolism; IMP biosynthesis via de novo pathway; 5-amino-1-(5-phospho-D-ribosyl)imidazole from N(2)-formyl-N(1)-(5-phospho-D-ribosyl)glycinamide: step 2/2. In Geobacillus sp. (strain WCH70), this protein is Phosphoribosylformylglycinamidine cyclo-ligase.